A 258-amino-acid polypeptide reads, in one-letter code: Small ribosomal subunit protein mS23 (258 aa).

The protein belongs to the mitochondrion-specific ribosomal protein mS23 family. Component of the mitochondrial small ribosomal subunit.

It localises to the mitochondrion. The polypeptide is Small ribosomal subunit protein mS23 (rsm25) (Aspergillus fumigatus (strain ATCC MYA-4609 / CBS 101355 / FGSC A1100 / Af293) (Neosartorya fumigata)).